The sequence spans 362 residues: UPF0324 membrane protein YPO1307/y2878/YP_1285 (362 aa).

A run of 9 helical transmembrane segments spans residues 21–38 (YIPGLVLTGVITGLALNV), 48–70 (GLGALTLAILFGIIVGNTLYPWL), 102–124 (VADVGATGMVIDLLTLSSTFILA), 139–161 (VMLIGAGSSICGAAAIMATEPVL), 168–190 (VAVAVATVVIFGTLAIFVYPWLY), 240–257 (MIRVMMLAPFLLLLSAYL), 278–300 (WFAVIFILMAGFNSLNLLPAVWV), 305–327 (TLDTILLAMAMAALGLTTHIGSI), and 334–356 (PLLLALLLFIWLLVGGTGINLFV).

The protein belongs to the UPF0324 family.

It localises to the cell membrane. This Yersinia pestis protein is UPF0324 membrane protein YPO1307/y2878/YP_1285.